A 247-amino-acid polypeptide reads, in one-letter code: Segregation and condensation protein A (247 aa).

The protein belongs to the ScpA family. As to quaternary structure, component of a cohesin-like complex composed of ScpA, ScpB and the Smc homodimer, in which ScpA and ScpB bind to the head domain of Smc. The presence of the three proteins is required for the association of the complex with DNA.

It localises to the cytoplasm. In terms of biological role, participates in chromosomal partition during cell division. May act via the formation of a condensin-like complex containing Smc and ScpB that pull DNA away from mid-cell into both cell halves. The protein is Segregation and condensation protein A of Bacillus cereus (strain ATCC 10987 / NRS 248).